A 315-amino-acid chain; its full sequence is Protein phosphatase PTC7 homolog fig (315 aa).

Residues 54–309 (KHSIASAKDN…DDITVILATV (256 aa)) form the PPM-type phosphatase domain. Residues Asp86, Gly87, and Asp231 each contribute to the Mn(2+) site.

This sequence belongs to the PP2C family. Requires Mg(2+) as cofactor. Mn(2+) is required as a cofactor.

The catalysed reaction is O-phospho-L-seryl-[protein] + H2O = L-seryl-[protein] + phosphate. The enzyme catalyses O-phospho-L-threonyl-[protein] + H2O = L-threonyl-[protein] + phosphate. The polypeptide is Protein phosphatase PTC7 homolog fig (Drosophila willistoni (Fruit fly)).